The primary structure comprises 220 residues: Ribose-5-phosphate isomerase A (220 aa).

Residues 28–31 (TGST), 81–84 (DGAD), and 94–97 (KGGG) contribute to the substrate site. Glutamate 103 acts as the Proton acceptor in catalysis. Residue lysine 121 coordinates substrate.

The protein belongs to the ribose 5-phosphate isomerase family. Homodimer.

The enzyme catalyses aldehydo-D-ribose 5-phosphate = D-ribulose 5-phosphate. It participates in carbohydrate degradation; pentose phosphate pathway; D-ribose 5-phosphate from D-ribulose 5-phosphate (non-oxidative stage): step 1/1. Functionally, catalyzes the reversible conversion of ribose-5-phosphate to ribulose 5-phosphate. This chain is Ribose-5-phosphate isomerase A, found in Shewanella baltica (strain OS185).